We begin with the raw amino-acid sequence, 143 residues long: uncharacterized protein (143 aa).

It is found in the cytoplasm. It localises to the nucleus. This is an uncharacterized protein from Schizosaccharomyces pombe (strain 972 / ATCC 24843) (Fission yeast).